We begin with the raw amino-acid sequence, 577 residues long: Nuclear receptor subfamily 4 group A member 1 (577 aa).

The nuclear receptor DNA-binding region spans 243 to 318; that stretch reads EGRCAVCGDN…VGMVKEVVRT (76 aa). 2 NR C4-type zinc fingers span residues 246–266 and 282–311; these read CAVC…CEGC and CLAN…VVGM. A required for binding NBRE-containing DNA region spans residues 247-333; that stretch reads AVCGDNASCQ…RRGRLPSKPK (87 aa). An NR LBD domain is found at 339–574; sequence SPVDLINSLV…PIVDKIFMDT (236 aa). The may bind lipopolysaccharide stretch occupies residues 500–523; it reads PKKVEELQSQIINCLKEHIPSSMN. The segment at 563 to 574 is AF-2; that stretch reads PPPIVDKIFMDT.

The protein belongs to the nuclear hormone receptor family. NR4 subfamily. Zn(2+) serves as cofactor.

The protein resides in the nucleus. The protein localises to the cytoplasm. It localises to the cytosol. In terms of biological role, orphan nuclear receptor. Binds the NGFI-B response element (NBRE) 5'-AAAAGGTCA-3'. Functionally, in the cytosol, may detect bacterial lipopolysaccharide (LPS) and NBRE-containing mitochondrial DNA released during pyroptosis, and play a role in non-canonical inflammasome activation. The chain is Nuclear receptor subfamily 4 group A member 1 (nr4a1) from Xenopus laevis (African clawed frog).